A 102-amino-acid chain; its full sequence is Small ribosomal subunit protein eS24 (102 aa).

This sequence belongs to the eukaryotic ribosomal protein eS24 family.

This chain is Small ribosomal subunit protein eS24, found in Methanobrevibacter smithii (strain ATCC 35061 / DSM 861 / OCM 144 / PS).